The sequence spans 274 residues: Large ribosomal subunit protein uL2 (274 aa).

Positions 223–274 are disordered; sequence VAMNPVDHPHGGGEGRTSGGRHPVTPWGVPTKGYKTRSNKRTDKYIVRRRNK.

The protein belongs to the universal ribosomal protein uL2 family. Part of the 50S ribosomal subunit. Forms a bridge to the 30S subunit in the 70S ribosome.

Its function is as follows. One of the primary rRNA binding proteins. Required for association of the 30S and 50S subunits to form the 70S ribosome, for tRNA binding and peptide bond formation. It has been suggested to have peptidyltransferase activity; this is somewhat controversial. Makes several contacts with the 16S rRNA in the 70S ribosome. This is Large ribosomal subunit protein uL2 from Shewanella baltica (strain OS223).